The primary structure comprises 189 residues: Peptidyl-tRNA hydrolase (189 aa).

Phenylalanine 15 serves as a coordination point for tRNA. The active-site Proton acceptor is the histidine 20. Positions 65, 67, and 113 each coordinate tRNA.

It belongs to the PTH family. Monomer.

It localises to the cytoplasm. It catalyses the reaction an N-acyl-L-alpha-aminoacyl-tRNA + H2O = an N-acyl-L-amino acid + a tRNA + H(+). In terms of biological role, hydrolyzes ribosome-free peptidyl-tRNAs (with 1 or more amino acids incorporated), which drop off the ribosome during protein synthesis, or as a result of ribosome stalling. Functionally, catalyzes the release of premature peptidyl moieties from peptidyl-tRNA molecules trapped in stalled 50S ribosomal subunits, and thus maintains levels of free tRNAs and 50S ribosomes. This is Peptidyl-tRNA hydrolase from Phytoplasma australiense.